The following is a 484-amino-acid chain: Endoglucanase 3 (484 aa).

An N-terminal signal peptide occupies residues 1 to 21 (MASPFFFVFLLSALSLENTYA). Asp-77 acts as the Nucleophile in catalysis. The N-linked (GlcNAc...) asparagine glycan is linked to Asn-370. Catalysis depends on residues His-402, Asp-453, and Glu-462.

Belongs to the glycosyl hydrolase 9 (cellulase E) family. As to expression, specifically expressed in root cap cells.

It localises to the secreted. The enzyme catalyses Endohydrolysis of (1-&gt;4)-beta-D-glucosidic linkages in cellulose, lichenin and cereal beta-D-glucans.. Functionally, may be involved in the sloughing (cell-cell separation) of the root cap cells from root tip. This chain is Endoglucanase 3 (CEL5), found in Arabidopsis thaliana (Mouse-ear cress).